Here is a 567-residue protein sequence, read N- to C-terminus: Oxygen-dependent choline dehydrogenase (567 aa).

Residue 6 to 35 coordinates FAD; the sequence is DYIIVGAGSAGNTLATRLTEDEGVTVLLLE. Residue H475 is the Proton acceptor of the active site.

This sequence belongs to the GMC oxidoreductase family. FAD is required as a cofactor.

The catalysed reaction is choline + A = betaine aldehyde + AH2. The enzyme catalyses betaine aldehyde + NAD(+) + H2O = glycine betaine + NADH + 2 H(+). The protein operates within amine and polyamine biosynthesis; betaine biosynthesis via choline pathway; betaine aldehyde from choline (cytochrome c reductase route): step 1/1. Its function is as follows. Involved in the biosynthesis of the osmoprotectant glycine betaine. Catalyzes the oxidation of choline to betaine aldehyde and betaine aldehyde to glycine betaine at the same rate. The sequence is that of Oxygen-dependent choline dehydrogenase from Pseudomonas fluorescens (strain SBW25).